Here is a 2904-residue protein sequence, read N- to C-terminus: Highly reducing polyketide synthase bet1 (2904 aa).

The 434-residue stretch at 8–441 (NEPIAIVGSG…GTNAHAIVES (434 aa)) folds into the Ketosynthase family 3 (KS3) domain. Residues cysteine 181, histidine 320, and histidine 361 each act as for beta-ketoacyl synthase activity in the active site. The acyl transferase (AT) domain stretch occupies residues 553-875 (VFTGQGAQYA…PYHGTLLRGG (323 aa)). Residues 948–1081 (HQLLGDVSPD…GELKVVLVDE (134 aa)) are N-terminal hotdog fold. The 310-residue stretch at 948 to 1257 (HQLLGDVSPD…FKPVGSDASN (310 aa)) folds into the PKS/mFAS DH domain. A dehydratase (DH) domain region spans residues 971–1255 (PREMTWLEGH…VKFKPVGSDA (285 aa)). Residue histidine 980 is the Proton acceptor; for dehydratase activity of the active site. The segment at 1098–1257 (MIPVQPSRLY…FKPVGSDASN (160 aa)) is C-terminal hotdog fold. Catalysis depends on aspartate 1159, which acts as the Proton donor; for dehydratase activity. Residues 1411–1596 (KQSTLWVASI…GFSGIDTMSP (186 aa)) are methyltransferase (cMeT) domain. The ketoreductase (KR)domain stretch occupies residues 2125–2298 (TYWLVGLSGA…RSSVVNVGAI (174 aa)). The Carrier domain maps to 2407–2486 (EVANVIKQAY…SLVELAAESI (80 aa)). Serine 2445 carries the O-(pantetheine 4'-phosphoryl)serine modification. The tract at residues 2492 to 2543 (PGVPQANANPNGPSSPDSDATESSNQNSDVDVTSTRATSPSTPAATSPDSNV) is disordered. Over residues 2497 to 2523 (ANANPNGPSSPDSDATESSNQNSDVDV) the composition is skewed to polar residues. Low complexity predominate over residues 2524 to 2541 (TSTRATSPSTPAATSPDS). Residues 2585–2817 (LTGCSGLLGH…DLVSVETCCE (233 aa)) are reductase (R) domain.

It depends on pantetheine 4'-phosphate as a cofactor.

It catalyses the reaction 7 malonyl-CoA + acetyl-CoA + 10 AH2 + 5 S-adenosyl-L-methionine + 2 H(+) = dehydroprobetaenone I + 10 A + 5 S-adenosyl-L-homocysteine + 7 CO2 + 8 CoA + 6 H2O. Its pathway is mycotoxin biosynthesis. Highly reducing polyketide synthase; part of the gene cluster that mediates the biosynthesis of betaenones, phytotoxic polyketides involved in leaf spot disease in sugar beets. The first step of the pathway is the synthesis of dehydroprobetaenone I by the polyketide synthase bet1 and the enoyl reductase bet3 via condensation of one acetyl-CoA starter unit with 7 malonyl-CoA units and 5 methylations. The C-terminal reductase (R) domain of bet1 catalyzes the reductive release of the polyketide chain. Because bet1 lacks a designated enoylreductase (ER) domain, the required activity is provided the enoyl reductase bet3. The short-chain dehydrogenase/reductase bet4 then catalyzes reduction of dehydroprobetaenone I to probetaenone I. The cytochrome P450 monooxygenase bet2 catalyzes successive epoxidation, oxidation (resulting from epoxide opening) and hydroxylation to install a tertiary alcohol in the decaline ring to yield betaenone C from dehydroprobetaenone I and betaenone B from probetaenone I. The FAD-linked oxidoreductase (orf1) is probably responsible for the conversion of betaenone C to betaenone A via an intramolecular aldol reaction between C-1 and C-17 to form the bridged tricyclic system in betaenone A. The sequence is that of Highly reducing polyketide synthase bet1 from Neocamarosporium betae (Beet black rot fungus).